The chain runs to 736 residues: Centrosomal protein kizuna (736 aa).

Residues 10–35 adopt a coiled-coil conformation; that stretch reads HRAMKLQRNLRHCEGKRLELERELFQ. A compositionally biased stretch (polar residues) spans 192–208; it reads NTSFQLSQKMPVTSVAS. Disordered stretches follow at residues 192–238, 279–305, 323–348, and 642–690; these read NTSF…SAQL, SFTHANPSGASPDACDYINNQTSDKHS, EDKQCLDSSSDLTVSISESEDDSYPP, and TVEE…NMST. Over residues 210-219 the composition is skewed to basic and acidic residues; sequence EDGRTHRAQI. Residues 328–339 show a composition bias toward polar residues; sequence LDSSSDLTVSIS. Over residues 658–668 the composition is skewed to low complexity; that stretch reads SETSFSSSEKS. Polar residues predominate over residues 678–690; the sequence is IQPNYMKSNNMST.

Belongs to the kizuna family.

It localises to the cytoplasm. The protein resides in the cytoskeleton. The protein localises to the microtubule organizing center. It is found in the centrosome. Its subcellular location is the cilium basal body. Centrosomal protein required for establishing a robust mitotic centrosome architecture that can endure the forces that converge on the centrosomes during spindle formation. Required for stabilizing the expanded pericentriolar material around the centriole. The protein is Centrosomal protein kizuna (kiz) of Xenopus laevis (African clawed frog).